An 880-amino-acid chain; its full sequence is uncharacterized protein (880 aa).

Disordered regions lie at residues 101–149 (KPIP…LRSE), 191–224 (PETS…ISTH), 240–273 (TTTT…PILK), 294–350 (NSNS…STTS), 425–446 (QPDS…ESQP), 470–508 (STST…SSSS), 536–561 (MESS…NDNS), 580–613 (APQS…NDDE), 682–713 (NTNT…NINN), and 844–880 (NSSG…KSEI). Positions 113 to 147 (ISIKEKEKEKEKEKEKEKEKEKEKEKEMKSTINLR) form a coiled coil. Basic and acidic residues predominate over residues 115-149 (IKEKEKEKEKEKEKEKEKEKEKEKEMKSTINLRSE). Low complexity-rich tracts occupy residues 193-223 (TSTP…SIST) and 240-256 (TTTT…PSSS). A compositionally biased stretch (polar residues) spans 257-271 (IAGITNPTSRSSSPI). The span at 294–332 (NSNSSSGGGNNNNKSISTPSSPIISRPITNKINNNNNNN) shows a compositional bias: low complexity. The segment covering 333–342 (QPQLHYNQPQ) has biased composition (polar residues). Over residues 536–548 (MESSTTTTLLSEN) the composition is skewed to low complexity. The span at 589–613 (QPEDDPFFDFEDLSDDDDSNDNDDE) shows a compositional bias: acidic residues. Positions 844–864 (NSSGSGNNSNDNSGSSSPSSS) are enriched in low complexity. Over residues 865–880 (KTNTLNQQSICIKSEI) the composition is skewed to polar residues.

This is an uncharacterized protein from Dictyostelium discoideum (Social amoeba).